An 89-amino-acid polypeptide reads, in one-letter code: Luqin-like RYamide peptides lury-1 (89 aa).

The signal sequence occupies residues 1-19 (MLTRVPVLILAVIVMLALC). Positions 20–26 (QEPEKPE) are excised as a propeptide. Tyr-35 and Tyr-43 each carry tyrosine amide. A propeptide spanning residues 47–89 (SGNLMESSQNSLTEESSDVVCQLIDGKYICLPVDAVRFRPFFL) is cleaved from the precursor.

In terms of tissue distribution, expressed in the M1 and M2 pharyngeal neurons from where the LURY-1-1 and LURY-1-2 peptides are secreted.

The protein localises to the secreted. Functionally, acts as a ligand for the npr-22 receptor and controls food-related processes including feeding, lifespan, egg-laying and roaming behavior. Secreted in the presence of food, leading to reduced feeding and roaming behavior and increased egg laying and lifespan. Activity may be latent under normal conditions but induced under conditions that cause hyperactivation of the pharynx such as abrupt refeeding after starvation. This chain is Luqin-like RYamide peptides lury-1, found in Caenorhabditis elegans.